Reading from the N-terminus, the 385-residue chain is ATP phosphoribosyltransferase regulatory subunit (385 aa).

The protein belongs to the class-II aminoacyl-tRNA synthetase family. HisZ subfamily. As to quaternary structure, heteromultimer composed of HisG and HisZ subunits.

The protein resides in the cytoplasm. It participates in amino-acid biosynthesis; L-histidine biosynthesis; L-histidine from 5-phospho-alpha-D-ribose 1-diphosphate: step 1/9. Required for the first step of histidine biosynthesis. May allow the feedback regulation of ATP phosphoribosyltransferase activity by histidine. The chain is ATP phosphoribosyltransferase regulatory subunit from Lysinibacillus sphaericus (strain C3-41).